The following is a 1801-amino-acid chain: Sperm flagellar protein 2 (1801 aa).

In terms of domain architecture, Calponin-homology (CH) spans 1 to 105 (MSEILCQWLN…LLYQLYIALQ (105 aa)). Coiled-coil stretches lie at residues 176–260 (EKFE…KDLQ) and 321–395 (AHEA…TKQA). The segment at 632–659 (QDKNELTDTQVPGEAAPQKEGTKSSDFE) is disordered. Coiled-coil stretches lie at residues 722 to 748 (NQAKLLEEALTGYKRKSLQLKKKKAQM) and 869 to 895 (ATEVSNKKIKVEKKLEEKETEKKSAVS). Basic and acidic residues-rich tracts occupy residues 883–892 (LEEKETEKKS) and 909–918 (EAEKEKEVHQ). Positions 883–949 (LEEKETEKKS…KISVKKSPID (67 aa)) are disordered. Positions 1051 to 1077 (EDLWEDEETKAELHQRVNDLRDRLWDI) form a coiled coil. Basic and acidic residues-rich tracts occupy residues 1233-1250 (RLAEEEKEQPQLDPKEKS) and 1261-1295 (KEKEQAKKEKEQAKKEKEQAKKEKEPPKKKMAEKK). 3 disordered regions span residues 1233 to 1304 (RLAE…SPVV), 1651 to 1695 (KTSI…NANT), and 1781 to 1801 (SEHAQGSDGERSPSRLTDEKK). A coiled-coil region spans residues 1252–1286 (QSGTNKKAKKEKEQAKKEKEQAKKEKEQAKKEKEP). Positions 1305-1657 (EVSPVTITPE…TAEKTSISSV (353 aa)) are interaction with IFT20. A coiled-coil region spans residues 1665–1695 (EAEENSTREELKEEKDERDQKEEEIPENANT). Basic and acidic residues predominate over residues 1669 to 1687 (NSTREELKEEKDERDQKEE).

As to quaternary structure, interacts (via C-terminus) with IFT20. Interacts with DYNC1I2. As to expression, predominantly expressed in ciliated tissues such as lung, trachea, testis, brain, and at lower levels in kidney and spleen.

It is found in the cell projection. The protein resides in the cilium. It localises to the flagellum. The protein localises to the cytoplasm. Its subcellular location is the golgi apparatus. In terms of biological role, required for correct axoneme development in spermatozoa. Important for normal development of the manchette and sperm head morphology. Essential for male fertility. Plays a role in localization of the intraflagellar transport protein IFT20 to the manchette, suggesting function as an adapter for dynein-mediated protein transport during spermatogenesis. Also plays a role in bone growth where it seems to be required for normal osteoblast differentiation. The chain is Sperm flagellar protein 2 (Spef2) from Rattus norvegicus (Rat).